We begin with the raw amino-acid sequence, 485 residues long: CUGBP Elav-like family member 5 (485 aa).

The span at 1 to 11 shows a compositional bias: basic and acidic residues; the sequence is MARLTESEARR. A disordered region spans residues 1 to 40; it reads MARLTESEARRQQQQLLQPRPSPVGSSGPEPPGGQPDGMK. Positions 12–28 are enriched in low complexity; the sequence is QQQQLLQPRPSPVGSSG. RRM domains follow at residues 45 to 126, 134 to 214, and 400 to 478; these read IKLF…PADS, RKLF…FADT, and CNLF…LKRP.

It belongs to the CELF/BRUNOL family. In terms of tissue distribution, expressed in brain.

It localises to the nucleus. The protein resides in the cytoplasm. RNA-binding protein implicated in the regulation of pre-mRNA alternative splicing. Mediates exon inclusion and/or exclusion in pre-mRNA that are subject to tissue-specific and developmentally regulated alternative splicing. Specifically activates exon 5 inclusion of cardiac isoforms of TNNT2 during heart remodeling at the juvenile to adult transition. Binds to muscle-specific splicing enhancer (MSE) intronic sites flanking the alternative exon 5 of TNNT2 pre-mRNA. In Homo sapiens (Human), this protein is CUGBP Elav-like family member 5 (CELF5).